The chain runs to 133 residues: Ribosome-binding factor A (133 aa).

Belongs to the RbfA family. Monomer. Binds 30S ribosomal subunits, but not 50S ribosomal subunits or 70S ribosomes.

It localises to the cytoplasm. One of several proteins that assist in the late maturation steps of the functional core of the 30S ribosomal subunit. Associates with free 30S ribosomal subunits (but not with 30S subunits that are part of 70S ribosomes or polysomes). Required for efficient processing of 16S rRNA. May interact with the 5'-terminal helix region of 16S rRNA. This chain is Ribosome-binding factor A, found in Klebsiella pneumoniae (strain 342).